The primary structure comprises 119 residues: Large ribosomal subunit protein bL17 (119 aa).

It belongs to the bacterial ribosomal protein bL17 family. As to quaternary structure, part of the 50S ribosomal subunit. Contacts protein L32.

In Psychrobacter sp. (strain PRwf-1), this protein is Large ribosomal subunit protein bL17.